A 229-amino-acid polypeptide reads, in one-letter code: Large ribosomal subunit protein uL1 (229 aa).

It belongs to the universal ribosomal protein uL1 family. As to quaternary structure, part of the 50S ribosomal subunit.

Binds directly to 23S rRNA. The L1 stalk is quite mobile in the ribosome, and is involved in E site tRNA release. Functionally, protein L1 is also a translational repressor protein, it controls the translation of the L11 operon by binding to its mRNA. This Streptococcus equi subsp. equi (strain 4047) protein is Large ribosomal subunit protein uL1.